A 368-amino-acid polypeptide reads, in one-letter code: Homoserine O-acetyltransferase (368 aa).

Residues 43 to 346 (ILLEHALTGT…EYGHDAFLVE (304 aa)) form the AB hydrolase-1 domain. Ser145 functions as the Nucleophile in the catalytic mechanism. Arg212 is a substrate binding site. Catalysis depends on residues Asp307 and His340. Substrate is bound at residue Asp341.

The protein belongs to the AB hydrolase superfamily. MetX family. Homodimer.

The protein resides in the cytoplasm. It catalyses the reaction L-homoserine + acetyl-CoA = O-acetyl-L-homoserine + CoA. The protein operates within amino-acid biosynthesis; L-methionine biosynthesis via de novo pathway; O-acetyl-L-homoserine from L-homoserine: step 1/1. In terms of biological role, transfers an acetyl group from acetyl-CoA to L-homoserine, forming acetyl-L-homoserine. This is Homoserine O-acetyltransferase from Listeria innocua serovar 6a (strain ATCC BAA-680 / CLIP 11262).